The primary structure comprises 280 residues: Hydroxyethylthiazole kinase (280 aa).

Met58 serves as a coordination point for substrate. Arg129 contributes to the ATP binding site. Ala206 contributes to the substrate binding site.

This sequence belongs to the Thz kinase family. The cofactor is Mg(2+).

The catalysed reaction is 5-(2-hydroxyethyl)-4-methylthiazole + ATP = 4-methyl-5-(2-phosphooxyethyl)-thiazole + ADP + H(+). It functions in the pathway cofactor biosynthesis; thiamine diphosphate biosynthesis; 4-methyl-5-(2-phosphoethyl)-thiazole from 5-(2-hydroxyethyl)-4-methylthiazole: step 1/1. In terms of biological role, thiazole kinase involved in thiamine salvage pathway. The sequence is that of Hydroxyethylthiazole kinase (THIM) from Zea mays (Maize).